Here is a 132-residue protein sequence, read N- to C-terminus: Small ribosomal subunit protein uS17c (132 aa).

Low complexity predominate over residues 1-11 (MLLLSSPFVSV). Disordered regions lie at residues 1–23 (MLLLSSPFVSVSPPPPPLSSHGA) and 104–132 (PLPPRDTRRKSQLLPPLQSDDDQEPSSRE). The transit peptide at 1-31 (MLLLSSPFVSVSPPPPPLSSHGARPALRIEA) directs the protein to the chloroplast. Over residues 122–132 (SDDDQEPSSRE) the composition is skewed to acidic residues.

Belongs to the universal ribosomal protein uS17 family. As to quaternary structure, part of the 30S ribosomal subunit.

The protein resides in the plastid. Its subcellular location is the chloroplast. In terms of biological role, one of the primary rRNA binding proteins, it binds specifically to the 5'-end of 16S ribosomal RNA. Functionally, in the hcf60 mutation the Activator tag is inserted 17 base pars upstream of the initiation codon. This mutation is seedling lethal, due to plastid ribosome insufficiency. However under non-light stressed conditions photosynthesis and oxygen evolution can occur. The polypeptide is Small ribosomal subunit protein uS17c (RPS17) (Zea mays (Maize)).